We begin with the raw amino-acid sequence, 511 residues long: Arabinose import ATP-binding protein AraG (511 aa).

2 ABC transporter domains span residues 5-240 (LEFR…MVGR) and 240-501 (RQID…LRPR). 37–44 (GENGAGKS) serves as a coordination point for ATP.

This sequence belongs to the ABC transporter superfamily. Arabinose importer (TC 3.A.1.2.2) family. As to quaternary structure, the complex is composed of two ATP-binding proteins (AraG), two transmembrane proteins (AraH) and a solute-binding protein (AraF).

It localises to the cell inner membrane. The catalysed reaction is L-arabinose(out) + ATP + H2O = L-arabinose(in) + ADP + phosphate + H(+). Functionally, part of the ABC transporter complex AraFGH involved in arabinose import. Responsible for energy coupling to the transport system. In Ralstonia nicotianae (strain ATCC BAA-1114 / GMI1000) (Ralstonia solanacearum), this protein is Arabinose import ATP-binding protein AraG.